Reading from the N-terminus, the 209-residue chain is Large ribosomal subunit protein uL3 (209 aa).

A disordered region spans residues 127–151 (SGGPSSHGSKFHRHLGGTGQATTPA).

Belongs to the universal ribosomal protein uL3 family. Part of the 50S ribosomal subunit. Forms a cluster with proteins L14 and L19.

Its function is as follows. One of the primary rRNA binding proteins, it binds directly near the 3'-end of the 23S rRNA, where it nucleates assembly of the 50S subunit. This is Large ribosomal subunit protein uL3 from Borrelia turicatae (strain 91E135).